A 482-amino-acid chain; its full sequence is Altronate oxidoreductase (482 aa).

18–29 contacts NAD(+); sequence IIQFGEGNFLRA.

The protein belongs to the mannitol dehydrogenase family. UxaB subfamily.

It catalyses the reaction D-altronate + NAD(+) = keto-D-tagaturonate + NADH + H(+). It participates in carbohydrate metabolism; pentose and glucuronate interconversion. The chain is Altronate oxidoreductase from Shigella sonnei (strain Ss046).